A 496-amino-acid chain; its full sequence is MFS transporter cpaT (496 aa).

Positions 1-45 are disordered; that stretch reads MGHQEEPPRICKTPSGHEQGEGPAEKTSKPSTEEVGWDGPTDPAR. Residues 18-32 show a composition bias toward basic and acidic residues; the sequence is EQGEGPAEKTSKPST. Asparagine 48 is a glycosylation site (N-linked (GlcNAc...) asparagine). Residues 58–78 form a helical membrane-spanning segment; that stretch reads MGIISYLTFLTPLTSSIVAPA. N-linked (GlcNAc...) asparagine glycosylation occurs at asparagine 90. The next 5 helical transmembrane spans lie at 93–113, 130–150, 154–174, 180–200, and 212–232; these read LASF…LFLA, FIFT…ALLV, FAGI…ADMF, GVAM…GPIA, and WVFW…LFVL. Asparagine 252 carries N-linked (GlcNAc...) asparagine glycosylation. Helical transmembrane passes span 288 to 308, 325 to 345, 367 to 387, 395 to 415, 427 to 449, and 463 to 483; these read VALF…LFTT, GLVY…FGAL, LPPL…YGWS, IMPI…LLPI, AASA…PLAG, and SLLG…YFYG.

This sequence belongs to the major facilitator superfamily.

Its subcellular location is the membrane. Its function is as follows. MFS transporter; part of the gene cluster that mediates the biosynthesis of the fungal neurotoxin cyclopiazonic acid (CPA), a nanomolar inhibitor of Ca(2+)-ATPase with a unique pentacyclic indole tetramic acid scaffold. This Aspergillus oryzae (Yellow koji mold) protein is MFS transporter cpaT.